We begin with the raw amino-acid sequence, 128 residues long: Protein ApaG (128 aa).

Positions 1–123 (MTSSPDITVS…FRLDIAPESG (123 aa)) constitute an ApaG domain.

This is Protein ApaG from Deinococcus radiodurans (strain ATCC 13939 / DSM 20539 / JCM 16871 / CCUG 27074 / LMG 4051 / NBRC 15346 / NCIMB 9279 / VKM B-1422 / R1).